The chain runs to 262 residues: tRNA pseudouridine synthase A (262 aa).

Catalysis depends on D51, which acts as the Nucleophile. Y109 provides a ligand contact to substrate.

It belongs to the tRNA pseudouridine synthase TruA family. As to quaternary structure, homodimer.

It carries out the reaction uridine(38/39/40) in tRNA = pseudouridine(38/39/40) in tRNA. Its function is as follows. Formation of pseudouridine at positions 38, 39 and 40 in the anticodon stem and loop of transfer RNAs. This Dechloromonas aromatica (strain RCB) protein is tRNA pseudouridine synthase A.